Here is a 171-residue protein sequence, read N- to C-terminus: Secretion monitor (171 aa).

Residues 1 to 36 form the signal peptide; it reads MIGILNRWRQFGRRYFWPHLLLGMVAASLGLPTSLN.

This sequence belongs to the SecM family.

It is found in the cytoplasm. The protein resides in the cytosol. Its subcellular location is the periplasm. Its function is as follows. Regulates secA expression by translational coupling of the secM secA operon. Translational pausing at a specific Pro residue 5 residues before the end of the protein may allow disruption of a mRNA repressor helix that normally suppresses secA translation initiation. This is Secretion monitor from Pectobacterium carotovorum subsp. carotovorum (strain PC1).